The primary structure comprises 482 residues: Exodeoxyribonuclease I (482 aa).

The Exonuclease domain maps to 13–194; that stretch reads LFYDYETFGI…TSDVYATIEL (182 aa). Mg(2+) is bound by residues aspartate 16, glutamate 18, and aspartate 187. Glutamate 18 is a substrate binding site. Residues 203 to 351 enclose the ExoI SH3-like domain; that stretch reads PKLFDFFFKY…LVKNVLLKKN (149 aa). Positions 355–471 constitute an ExoI C-terminal domain; it reads NSLNVDLQIY…DLLKYVFKKY (117 aa).

As to quaternary structure, monomer. Interacts with ssb (via C-terminus); this interaction stimulates the exonuclease activity by recruiting the enzyme to its substrate. The cofactor is Mg(2+).

The enzyme catalyses Exonucleolytic cleavage in the 3'- to 5'-direction to yield nucleoside 5'-phosphates.. In terms of biological role, degrades single-stranded DNA (ssDNA) in a highly processive manner. Also functions as a DNA deoxyribophosphodiesterase that releases deoxyribose-phosphate moieties following the cleavage of DNA at an apurinic/apyrimidinic (AP) site by either an AP endonuclease or AP lyase. This is Exodeoxyribonuclease I (sbcB) from Buchnera aphidicola subsp. Schizaphis graminum (strain Sg).